Consider the following 505-residue polypeptide: MSARITPQTPALQALRMRLHAQHQPVVLMRTDCHVCRAEGLAPRSQVLIIAGDRTVQALLYQIDSDLLKTGQIALSEAAWDALDIHEGDLVQVRHPPLLESLSAVRARIHGHRLQTTELQAIVRDVVDGRYTDVALSAFLTATAVLPLDMQETIHLTRAMVDVGDHLQWQAPIVVDKHCVGGLPGNRTTPLVVAIAAANGLVMPKTSSRAITSPAGTADTMETLAPVDLDLDTLRKVVEKEGGCVAWGGAMHLSPADDIFVRIERELDIDTQGQLIASVLSKKIAAGATHIVIDIPVGPTAKVRSRETAEHLAHHLSEVAASFGLVLRCLFTDGNQPVGRGIGPALEARDVLAVLRNEADAPQDLCDRVALVAGAVLELGGVAKEGDGIRLAHETISSGRAWEKFQRICAAQGGFREPPQALYVEPLLATTSGRAVHIDNRKLSRLAKLAGAPESPAAGIQLQVRLGDEVTRGQSLMFLHAQTSGEMAYALAYVHDIGDIVKIEP.

Belongs to the thymidine/pyrimidine-nucleoside phosphorylase family. Type 2 subfamily.

It carries out the reaction thymidine + phosphate = 2-deoxy-alpha-D-ribose 1-phosphate + thymine. This is Putative thymidine phosphorylase from Parvibaculum lavamentivorans (strain DS-1 / DSM 13023 / NCIMB 13966).